The sequence spans 356 residues: Vesicular integral-membrane protein VIP36 (356 aa).

The N-terminal stretch at 1–44 (MAAEGWIWRWGWGRRCLGRPGLPGPGPGPATPLFLLLLLGPVVA) is a signal peptide. Topologically, residues 45–322 (DITDGNSEHL…FRSGPLTGWR (278 aa)) are lumenal. In terms of domain architecture, L-type lectin-like spans 52 to 276 (EHLKREHSLI…DIISMKLFQL (225 aa)). A carbohydrate is bound by residues Ser-96 and Asp-131. Positions 162, 164, and 166 each coordinate Ca(2+). 164-166 (YPN) contributes to the a carbohydrate binding site. Asn-183 is a glycosylation site (N-linked (GlcNAc...) asparagine). A carbohydrate is bound at residue His-190. A Ca(2+)-binding site is contributed by Asp-193. Cysteines 202 and 239 form a disulfide. 260–262 (GDL) is a binding site for a carbohydrate. Residues 323–345 (VFLLLLCALLGIIVCAVVGAVVF) form a helical membrane-spanning segment. The Cytoplasmic portion of the chain corresponds to 346 to 356 (QKRQERNKRFY).

Monomer. The cofactor is Ca(2+). Expressed in kidney, liver, intestine, lung, spleen and heart. Low expression in brain.

Its subcellular location is the golgi apparatus membrane. In terms of biological role, plays a role as an intracellular lectin in the early secretory pathway. Interacts with N-acetyl-D-galactosamine and high-mannose type glycans and may also bind to O-linked glycans. Involved in the transport and sorting of glycoproteins carrying high mannose-type glycans. The chain is Vesicular integral-membrane protein VIP36 (LMAN2) from Canis lupus familiaris (Dog).